Reading from the N-terminus, the 134-residue chain is uncharacterized protein (134 aa).

Belongs to the orthopoxviruses B21 protein family.

This is an uncharacterized protein from Bos taurus (Bovine).